The following is a 217-amino-acid chain: Adenylate kinase (217 aa).

ATP is bound at residue 10 to 15 (GGGKGT). Positions 30–59 (STGDMLRAAVASGSEVGKKAKAVMDAGQLV) are NMP. AMP is bound by residues Thr-31, Arg-36, 57–59 (QLV), 85–88 (GFPR), and Gln-92. The segment at 126–164 (GRYTCAKCGAGYHDKFQLPQVAGKCDSCGGTEFARRPDD) is LID. Arg-127 is a binding site for ATP. The Zn(2+) site is built by Cys-130, Cys-133, Cys-150, and Cys-153. 2 residues coordinate AMP: Arg-161 and Arg-172. Met-200 provides a ligand contact to ATP.

It belongs to the adenylate kinase family. Monomer.

It is found in the cytoplasm. The enzyme catalyses AMP + ATP = 2 ADP. Its pathway is purine metabolism; AMP biosynthesis via salvage pathway; AMP from ADP: step 1/1. Its function is as follows. Catalyzes the reversible transfer of the terminal phosphate group between ATP and AMP. Plays an important role in cellular energy homeostasis and in adenine nucleotide metabolism. This is Adenylate kinase from Paramagnetospirillum magneticum (strain ATCC 700264 / AMB-1) (Magnetospirillum magneticum).